The following is a 432-amino-acid chain: Serine hydroxymethyltransferase (432 aa).

Residues Leu-127 and 131–133 (GHL) contribute to the (6S)-5,6,7,8-tetrahydrofolate site. The residue at position 236 (Lys-236) is an N6-(pyridoxal phosphate)lysine.

It belongs to the SHMT family. As to quaternary structure, homodimer. It depends on pyridoxal 5'-phosphate as a cofactor.

The protein resides in the cytoplasm. It carries out the reaction (6R)-5,10-methylene-5,6,7,8-tetrahydrofolate + glycine + H2O = (6S)-5,6,7,8-tetrahydrofolate + L-serine. It participates in one-carbon metabolism; tetrahydrofolate interconversion. It functions in the pathway amino-acid biosynthesis; glycine biosynthesis; glycine from L-serine: step 1/1. In terms of biological role, catalyzes the reversible interconversion of serine and glycine with tetrahydrofolate (THF) serving as the one-carbon carrier. This reaction serves as the major source of one-carbon groups required for the biosynthesis of purines, thymidylate, methionine, and other important biomolecules. Also exhibits THF-independent aldolase activity toward beta-hydroxyamino acids, producing glycine and aldehydes, via a retro-aldol mechanism. The sequence is that of Serine hydroxymethyltransferase from Rhizobium etli (strain ATCC 51251 / DSM 11541 / JCM 21823 / NBRC 15573 / CFN 42).